The following is a 305-amino-acid chain: Spermatogenesis-associated protein 4 (305 aa).

The region spanning 49–155 is the Calponin-homology (CH) domain; it reads SRLSRSVLRW…EEVYTLLTHR (107 aa).

As to expression, highly expressed in testis, the expression is observed precisely in seminiferous tubules.

Its subcellular location is the nucleus. Its function is as follows. May play a role in apoptosis regulation. The chain is Spermatogenesis-associated protein 4 (SPATA4) from Homo sapiens (Human).